Reading from the N-terminus, the 266-residue chain is DLA class II histocompatibility antigen, DR-1 beta chain (266 aa).

Residues M1 to A29 form the signal peptide. Residues R30–V124 form a beta-1 region. Topologically, residues R30–K227 are extracellular. 2 disulfide bridges follow: C44/C108 and C146/C202. N-linked (GlcNAc...) asparagine glycosylation is present at N48. Residues E125–K227 are beta-2. Residues P126–T214 form the Ig-like C1-type domain. The helical transmembrane segment at M228–F250 threads the bilayer. Residues R251–S266 lie on the Cytoplasmic side of the membrane.

Belongs to the MHC class II family.

The protein resides in the membrane. This chain is DLA class II histocompatibility antigen, DR-1 beta chain, found in Canis lupus familiaris (Dog).